Consider the following 443-residue polypeptide: Ribulose bisphosphate carboxylase large chain (443 aa).

Positions 89 and 139 each coordinate substrate. The Proton acceptor role is filled by Lys-141. Lys-143 is a substrate binding site. Lys-167, Asp-169, and Glu-170 together coordinate Mg(2+). Residue Lys-167 is modified to N6-carboxylysine. His-260 serves as the catalytic Proton acceptor. The substrate site is built by Arg-261, His-293, and Ser-345.

The protein belongs to the RuBisCO large chain family. Type I subfamily. As to quaternary structure, heterohexadecamer of 8 large chains and 8 small chains; disulfide-linked. The disulfide link is formed within the large subunit homodimers. Requires Mg(2+) as cofactor. Post-translationally, the disulfide bond which can form in the large chain dimeric partners within the hexadecamer appears to be associated with oxidative stress and protein turnover.

The protein resides in the plastid. Its subcellular location is the chloroplast. It catalyses the reaction 2 (2R)-3-phosphoglycerate + 2 H(+) = D-ribulose 1,5-bisphosphate + CO2 + H2O. The enzyme catalyses D-ribulose 1,5-bisphosphate + O2 = 2-phosphoglycolate + (2R)-3-phosphoglycerate + 2 H(+). Functionally, ruBisCO catalyzes two reactions: the carboxylation of D-ribulose 1,5-bisphosphate, the primary event in carbon dioxide fixation, as well as the oxidative fragmentation of the pentose substrate in the photorespiration process. Both reactions occur simultaneously and in competition at the same active site. The sequence is that of Ribulose bisphosphate carboxylase large chain from Buddleja davidii (Butterfly bush).